A 118-amino-acid chain; its full sequence is Histone H2B.N (118 aa).

The protein belongs to the histone H2B family. The nucleosome is a histone octamer containing two molecules each of H2A, H2B, H3 and H4 assembled in one H3-H4 heterotetramer and two H2A-H2B heterodimers. The octamer wraps approximately 147 bp of DNA. Expressed in germline. Predominantly expressed in oocytes.

The protein localises to the nucleus. It is found in the chromosome. Core component of nucleosome. Nucleosomes wrap and compact DNA into chromatin, limiting DNA accessibility to the cellular machineries which require DNA as a template. Histones thereby play a central role in transcription regulation, DNA repair, DNA replication and chromosomal stability. DNA accessibility is regulated via a complex set of post-translational modifications of histones, also called histone code, and nucleosome remodeling. This is Histone H2B.N from Homo sapiens (Human).